The sequence spans 160 residues: ATP synthase subunit delta, mitochondrial (160 aa).

Residues 1-22 (MLRSIIGKSASRSLNFVAKRSY) constitute a mitochondrion transit peptide.

It belongs to the ATPase epsilon chain family. In terms of assembly, F-type ATPases have 2 components, CF(1) - the catalytic core - and CF(0) - the membrane proton channel. CF(1) has five subunits: alpha(3), beta(3), gamma(1), delta(1), epsilon(1). CF(0) has three main subunits: a, b and c.

The protein resides in the mitochondrion. The protein localises to the mitochondrion inner membrane. In terms of biological role, mitochondrial membrane ATP synthase (F(1)F(0) ATP synthase or Complex V) produces ATP from ADP in the presence of a proton gradient across the membrane which is generated by electron transport complexes of the respiratory chain. F-type ATPases consist of two structural domains, F(1) - containing the extramembraneous catalytic core, and F(0) - containing the membrane proton channel, linked together by a central stalk and a peripheral stalk. During catalysis, ATP turnover in the catalytic domain of F(1) is coupled via a rotary mechanism of the central stalk subunits to proton translocation. Part of the complex F(1) domain and of the central stalk which is part of the complex rotary element. Rotation of the central stalk against the surrounding alpha(3)beta(3) subunits leads to hydrolysis of ATP in three separate catalytic sites on the beta subunits. This Saccharomyces cerevisiae (strain ATCC 204508 / S288c) (Baker's yeast) protein is ATP synthase subunit delta, mitochondrial (ATP16).